Here is a 200-residue protein sequence, read N- to C-terminus: Ciliary neurotrophic factor (200 aa).

It belongs to the CNTF family. Nervous system.

The protein resides in the cytoplasm. Its function is as follows. CNTF is a survival factor for various neuronal cell types. Seems to prevent the degeneration of motor axons after axotomy. This Sus scrofa (Pig) protein is Ciliary neurotrophic factor (CNTF).